Consider the following 316-residue polypeptide: tRNA dimethylallyltransferase (316 aa).

17–24 is a binding site for ATP; that stretch reads GPTASGKT. 19–24 provides a ligand contact to substrate; that stretch reads TASGKT. 3 interaction with substrate tRNA regions span residues 42-45, 166-170, and 247-252; these read DSAL, QRLSR, and RCVGYR.

It belongs to the IPP transferase family. As to quaternary structure, monomer. Requires Mg(2+) as cofactor.

The catalysed reaction is adenosine(37) in tRNA + dimethylallyl diphosphate = N(6)-dimethylallyladenosine(37) in tRNA + diphosphate. Its function is as follows. Catalyzes the transfer of a dimethylallyl group onto the adenine at position 37 in tRNAs that read codons beginning with uridine, leading to the formation of N6-(dimethylallyl)adenosine (i(6)A). In Salmonella newport (strain SL254), this protein is tRNA dimethylallyltransferase.